The sequence spans 360 residues: Probable dual-specificity RNA methyltransferase RlmN (360 aa).

The active-site Proton acceptor is Glu91. The Radical SAM core domain maps to 97 to 335 (QHYGQSVCVT…CVVRQEHGTD (239 aa)). A disulfide bridge connects residues Cys104 and Cys340. Residues Cys111, Cys115, and Cys118 each coordinate [4Fe-4S] cluster. S-adenosyl-L-methionine is bound by residues 163-164 (GE), Ser195, 218-220 (SLH), and Asn296. The active-site S-methylcysteine intermediate is Cys340.

Belongs to the radical SAM superfamily. RlmN family. It depends on [4Fe-4S] cluster as a cofactor.

Its subcellular location is the cytoplasm. The catalysed reaction is adenosine(2503) in 23S rRNA + 2 reduced [2Fe-2S]-[ferredoxin] + 2 S-adenosyl-L-methionine = 2-methyladenosine(2503) in 23S rRNA + 5'-deoxyadenosine + L-methionine + 2 oxidized [2Fe-2S]-[ferredoxin] + S-adenosyl-L-homocysteine. It catalyses the reaction adenosine(37) in tRNA + 2 reduced [2Fe-2S]-[ferredoxin] + 2 S-adenosyl-L-methionine = 2-methyladenosine(37) in tRNA + 5'-deoxyadenosine + L-methionine + 2 oxidized [2Fe-2S]-[ferredoxin] + S-adenosyl-L-homocysteine. Specifically methylates position 2 of adenine 2503 in 23S rRNA and position 2 of adenine 37 in tRNAs. The polypeptide is Probable dual-specificity RNA methyltransferase RlmN (Streptococcus equi subsp. zooepidemicus (strain H70)).